The chain runs to 139 residues: Asp-hemolysin (139 aa).

A propeptide spanning residues 1 to 5 (MASVQ) is cleaved from the precursor. The disordered stretch occupies residues 47-79 (TSEDVQQKTAPPGGSVNVNSCGRSDASSGTTGG). Polar residues predominate over residues 62–75 (VNVNSCGRSDASSG).

This sequence belongs to the aegerolysin family.

The protein is Asp-hemolysin of Aspergillus fumigatus (strain ATCC MYA-4609 / CBS 101355 / FGSC A1100 / Af293) (Neosartorya fumigata).